Reading from the N-terminus, the 106-residue chain is Large ribosomal subunit protein eL42 (106 aa).

The interval 36–56 is disordered; that stretch reads FAQGKRRYDRKQSGYGGQTKP.

This sequence belongs to the eukaryotic ribosomal protein eL42 family.

The protein is Large ribosomal subunit protein eL42 (RPL44) of Coprinopsis cinerea (strain Okayama-7 / 130 / ATCC MYA-4618 / FGSC 9003) (Inky cap fungus).